The chain runs to 148 residues: Ribonuclease 4 (148 aa).

The first 29 residues, 1-29 (MMDLQRTQSLLLLLVLTLLGLGLVQPSYG), serve as a signal peptide directing secretion. Glutamine 30 is modified (pyrrolidone carboxylic acid). Residues arginine 36, histidine 41, lysine 69, asparagine 72, and threonine 73 each contribute to the dUMP site. Histidine 41 acts as the Proton acceptor in catalysis. 4 cysteine pairs are disulfide-bonded: cysteine 54–cysteine 110, cysteine 68–cysteine 121, cysteine 86–cysteine 136, and cysteine 93–cysteine 100. Histidine 145 acts as the Proton donor in catalysis. Phenylalanine 146 serves as a coordination point for dUMP.

This sequence belongs to the pancreatic ribonuclease family. As to expression, expressed in the cortical tubules of the kidney (at protein level). Also expressed in the medullary tubules of the kidney.

Its subcellular location is the secreted. Functionally, cleaves preferentially after uridine bases. Has antimicrobial activity against uropathogenic E.coli (UPEC). Probably contributes to urinary tract sterility. This Mus musculus (Mouse) protein is Ribonuclease 4 (Rnase4).